We begin with the raw amino-acid sequence, 603 residues long: MTTAPIDNIRNFSIVAHIDHGKSTLADRLIQITGGMSDREMAGKEQVLDSMDIERERGITIKAQTVRLNYRAKDGKDYIFNLMDTPGHVDFAYEVSRSLAACEGSLLVVDASQGVEAQTLANVYHALDAGHEIVPVLNKVDLPAAEPDKVKQQIEDVIGLDASDAVMISAKTGLGVPDVLEAIVTRLPPPQGDRSAQLKALLVDSWYDVYLGVVVLVRVVDGVMKKGQRIRMMGTNAAYDLERVGYFTPKMTSVDELGPGEIGFITAAIKEVADTRVGDTITDDRKPITEMLPGFKPAIPVVFCGLFPVDADDFETLRGAMGKLRLNDASFSFEMETSAALGFGFRCGFLGLLHLEIIQERLSREFDLNLIATAPSVIYKMTLTDGTEMEIHNPVDMPDVVKIAEIQEPWIEATILTPDEYLGSVLKLCQDRRGNQKELTYVGARAMVKYDLPLNEVVFDFYDRLKSVSKGYASFDYHLTEYKPADLVKMQILVNAEPVDALSMLVHRTRAEGRGRAMVEKMKELIPPHMFVIPIQAAIGGKIIARETVRALRKDVTAKCYGGDITRKRKLLEKQKEGKKKMRQFGKVDIPQEAFIAALKVDS.

Residues 7–191 (DNIRNFSIVA…AIVTRLPPPQ (185 aa)) form the tr-type G domain. GTP contacts are provided by residues 19–24 (DHGKST) and 138–141 (NKVD).

It belongs to the TRAFAC class translation factor GTPase superfamily. Classic translation factor GTPase family. LepA subfamily.

It localises to the cell inner membrane. The enzyme catalyses GTP + H2O = GDP + phosphate + H(+). Functionally, required for accurate and efficient protein synthesis under certain stress conditions. May act as a fidelity factor of the translation reaction, by catalyzing a one-codon backward translocation of tRNAs on improperly translocated ribosomes. Back-translocation proceeds from a post-translocation (POST) complex to a pre-translocation (PRE) complex, thus giving elongation factor G a second chance to translocate the tRNAs correctly. Binds to ribosomes in a GTP-dependent manner. This is Elongation factor 4 from Rhodopseudomonas palustris (strain HaA2).